The primary structure comprises 102 residues: RNA-binding protein Hfq (102 aa).

A Sm domain is found at 9–68; it reads DPFLNALRRERVPVSIYLVNGIKLQGQIESFDQFVILLKNTVSQMVYKHAISTVVPSRPV. Residues 63-102 form a disordered region; that stretch reads VPSRPVSHHSNNTGGGSNNYHHGSSPAPSSQPQQDSADAE. Over residues 70–102 the composition is skewed to low complexity; sequence HHSNNTGGGSNNYHHGSSPAPSSQPQQDSADAE.

It belongs to the Hfq family. As to quaternary structure, homohexamer.

Functionally, RNA chaperone that binds small regulatory RNA (sRNAs) and mRNAs to facilitate mRNA translational regulation in response to envelope stress, environmental stress and changes in metabolite concentrations. Also binds with high specificity to tRNAs. The polypeptide is RNA-binding protein Hfq (Erwinia tasmaniensis (strain DSM 17950 / CFBP 7177 / CIP 109463 / NCPPB 4357 / Et1/99)).